We begin with the raw amino-acid sequence, 599 residues long: Elongation factor 4 (599 aa).

Residues 5-187 (SHIRNFSIIA…RLVTAIPAPE (183 aa)) enclose the tr-type G domain. Residues 17–22 (DHGKST) and 134–137 (NKMD) contribute to the GTP site.

This sequence belongs to the TRAFAC class translation factor GTPase superfamily. Classic translation factor GTPase family. LepA subfamily.

It is found in the cell inner membrane. The enzyme catalyses GTP + H2O = GDP + phosphate + H(+). Its function is as follows. Required for accurate and efficient protein synthesis under certain stress conditions. May act as a fidelity factor of the translation reaction, by catalyzing a one-codon backward translocation of tRNAs on improperly translocated ribosomes. Back-translocation proceeds from a post-translocation (POST) complex to a pre-translocation (PRE) complex, thus giving elongation factor G a second chance to translocate the tRNAs correctly. Binds to ribosomes in a GTP-dependent manner. This is Elongation factor 4 from Pseudomonas aeruginosa (strain LESB58).